Reading from the N-terminus, the 67-residue chain is Phycobilisome 7.8 kDa linker polypeptide, allophycocyanin-associated, core (67 aa).

The region spanning 1 to 56 is the CpcD-like domain; that stretch reads MRMFRITACVPSQTRIRTQRELQNTYFTKLVPYDNWFREQQRIMKMGGKIVKVELA.

It belongs to the phycobilisome linker protein family.

Its subcellular location is the cellular thylakoid membrane. In terms of biological role, rod linker protein, associated with allophycocyanin. Linker polypeptides determine the state of aggregation and the location of the disk-shaped phycobiliprotein units within the phycobilisome and modulate their spectroscopic properties in order to mediate a directed and optimal energy transfer. This chain is Phycobilisome 7.8 kDa linker polypeptide, allophycocyanin-associated, core (apcC), found in Synechocystis sp. (strain PCC 6714) (Aphanocapsa sp. (strain PCC 6714)).